The chain runs to 388 residues: Pepsin A-4 (388 aa).

The first 15 residues, 1-15, serve as a signal peptide directing secretion; sequence MKWLLLLGLVALSEC. The propeptide at 16–62 is activation peptide; it reads IMYKVPLIRKKSLRRTLSERGLLKDFLKKHNLNPARKYFPQWEAPTL. One can recognise a Peptidase A1 domain in the interval 76–385; the sequence is YFGTIGIGTP…DRANNQVGLA (310 aa). The active site involves D94. A disulfide bridge links C107 with C112. S130 carries the phosphoserine modification. A disulfide bridge connects residues C268 and C272. Residue D277 is part of the active site. C311 and C344 form a disulfide bridge.

The protein belongs to the peptidase A1 family.

It is found in the secreted. The catalysed reaction is Preferential cleavage: hydrophobic, preferably aromatic, residues in P1 and P1' positions. Cleaves 1-Phe-|-Val-2, 4-Gln-|-His-5, 13-Glu-|-Ala-14, 14-Ala-|-Leu-15, 15-Leu-|-Tyr-16, 16-Tyr-|-Leu-17, 23-Gly-|-Phe-24, 24-Phe-|-Phe-25 and 25-Phe-|-Tyr-26 bonds in the B chain of insulin.. In terms of biological role, shows particularly broad specificity; although bonds involving phenylalanine and leucine are preferred, many others are also cleaved to some extent. The protein is Pepsin A-4 (PGA4) of Homo sapiens (Human).